The sequence spans 442 residues: MHPETEQACLVPSSKKTKLCSENFEDKFSSLLESVVSIILSQLPTAEAVSTSVLSKSWKNIWTNITDLHFDDTKQRDPSDSRFTDFVERVVGDIGSPHISSFYLCSVNTFDETLLFSWLSKVLKRNLQRLVVTCNDLEIISFSSLFPSFVSLVELRLRTKSILDISAPAILPNLKFLSLEDARIFNMSSVSKNLVLNFPVLETFEASYCRCFRTDTVIIDSPLLRIFEMFKCTSEHVPNPSQVCKIRVLASKLEKITFCGDEPRKIHLSFPPSLPDAYLALSRSEWPKTFLRSFTCVTSLALVLSKDFHVMAVPKFSQLVYLHLIYDMTQHFRLMQFLKSAPILEMLSIRDLTSPRSTPTAKSLKELRSVESPDCVTTMLKVLQIRNFKPNRLQISVLRYVLDNAEILGSVILSSPNPITEEEKARILAFPKASPHASVLFE.

The region spanning 26-73 (DKFSSLLESVVSIILSQLPTAEAVSTSVLSKSWKNIWTNITDLHFDDT) is the F-box domain. 3 LRR repeats span residues 126-147 (NLQR…SLFP), 151-172 (SLVE…AILP), and 173-194 (NLKF…SKNL). The FBD domain maps to 370–414 (VESPDCVTTMLKVLQIRNFKPNRLQISVLRYVLDNAEILGSVILS).

The protein is F-box/FBD/LRR-repeat protein At3g14710 of Arabidopsis thaliana (Mouse-ear cress).